A 177-amino-acid chain; its full sequence is Bifunctional protein PyrR (177 aa).

Positions 101–113 (IILIDDVLYTGRT) match the PRPP-binding motif.

The protein belongs to the purine/pyrimidine phosphoribosyltransferase family. PyrR subfamily.

The catalysed reaction is UMP + diphosphate = 5-phospho-alpha-D-ribose 1-diphosphate + uracil. Regulates the transcription of the pyrimidine nucleotide (pyr) operon in response to exogenous pyrimidines. Functionally, also displays a weak uracil phosphoribosyltransferase activity which is not physiologically significant. The polypeptide is Bifunctional protein PyrR (Endomicrobium trichonymphae).